Reading from the N-terminus, the 752-residue chain is MGFTLLIDNYDSFTWNIYADLASVGGNPYVVRNDKITLKEIEGMFSDGELERIVISPGPGHPRTDSGVSRDVIAWGMGKLPILGVCMGLECIVDLLGGEIAYAGEIKHGKTSLVQHDSIGVFHNLPQFLSSTRYHSLSAQIQSLPSVLQVTSTTKESGVIMGVRHRTYTVEAVQYHPESCMSEGGRGLMANFIQMKGGKWGGENAWCGVPAEGEEEQPKAKTNGAPSLPTILNRIHAQRLLDVEQAEKVPATSPANVSTSLSLYASPPLINFRDRMVSTPHTAVMAEIKRASPSKGDIAPTASAPEQALKYALAGASVISVLTEPTWFKGSLLDMLAVRNAVDSLPNRPAILRKDFVLSKYMIDEARLYGADTVLLIVAMLEPQQLKELYDYSVSLGMEPLVEVNNPTELSLALEIGSKVIGVNNRNLHDFNVDMSTTSRVNAALNGRDVVLCALSGISSHEDVEKYVKEGVKGVLVGEALMRASDTKAFLRSLIGLPPLEVVPKSRPLVKICGIRSTDDAKLAISAGADLLGVILVPGTKRCISTSTAREISALVQSARSQSSSKPLEPSLSSPWFTTQSDLLSSRRKPLLVGVFQNQSLSDILSAVEEIGLDLVQLHGDEPQAWAKFIPVPVVKVFRVSPEGIVRGGEFRRPGLNQAILLDAGGVSGGGGEGKAFPWEHAKRLIQSGEVGSEGHMPLPVILAGGLTPENVGQAIEQAGEGVWCVDVSSGVEGEGGKVKEKVEAFVKAVRG.

Residues 3–202 (FTLLIDNYDS…IQMKGGKWGG (200 aa)) enclose the Glutamine amidotransferase type-1 domain. 58-60 (GPG) lines the L-glutamine pocket. The active-site Nucleophile; for GATase activity is Cys86. 136–137 (SL) contributes to the L-glutamine binding site. Catalysis depends on for GATase activity residues His176 and Glu178. Positions 231–495 (ILNRIHAQRL…DTKAFLRSLI (265 aa)) are indole-3-glycerol phosphate synthase. The interval 509–752 (LVKICGIRST…VEAFVKAVRG (244 aa)) is N-(5'-phosphoribosyl)anthranilate isomerase.

It carries out the reaction N-(5-phospho-beta-D-ribosyl)anthranilate = 1-(2-carboxyphenylamino)-1-deoxy-D-ribulose 5-phosphate. It catalyses the reaction 1-(2-carboxyphenylamino)-1-deoxy-D-ribulose 5-phosphate + H(+) = (1S,2R)-1-C-(indol-3-yl)glycerol 3-phosphate + CO2 + H2O. The catalysed reaction is chorismate + L-glutamine = anthranilate + pyruvate + L-glutamate + H(+). Its pathway is amino-acid biosynthesis; L-tryptophan biosynthesis; L-tryptophan from chorismate: step 1/5. The protein operates within amino-acid biosynthesis; L-tryptophan biosynthesis; L-tryptophan from chorismate: step 3/5. It participates in amino-acid biosynthesis; L-tryptophan biosynthesis; L-tryptophan from chorismate: step 4/5. Trifunctional enzyme bearing the Gln amidotransferase (GATase) domain of anthranilate synthase, indole-glycerolphosphate synthase, and phosphoribosylanthranilate isomerase activities. The protein is Multifunctional tryptophan biosynthesis protein (TRP1) of Cryptococcus neoformans var. neoformans serotype D (strain JEC21 / ATCC MYA-565) (Filobasidiella neoformans).